The chain runs to 147 residues: 3-hydroxyacyl-[acyl-carrier-protein] dehydratase FabZ (147 aa).

His-50 is a catalytic residue.

Belongs to the thioester dehydratase family. FabZ subfamily.

The protein localises to the cytoplasm. The enzyme catalyses a (3R)-hydroxyacyl-[ACP] = a (2E)-enoyl-[ACP] + H2O. Involved in unsaturated fatty acids biosynthesis. Catalyzes the dehydration of short chain beta-hydroxyacyl-ACPs and long chain saturated and unsaturated beta-hydroxyacyl-ACPs. This Lactiplantibacillus plantarum (strain ATCC BAA-793 / NCIMB 8826 / WCFS1) (Lactobacillus plantarum) protein is 3-hydroxyacyl-[acyl-carrier-protein] dehydratase FabZ.